The following is a 406-amino-acid chain: S-adenosylmethionine synthase (406 aa).

ATP is bound at residue histidine 16. Residue aspartate 18 coordinates Mg(2+). A K(+)-binding site is contributed by glutamate 44. L-methionine contacts are provided by glutamate 57 and glutamine 109. Residues 109-119 (QSPQIAQGVDE) form a flexible loop region. ATP-binding positions include 174–176 (DAK), 249–250 (RF), aspartate 258, 264–265 (RK), alanine 281, and lysine 285. Aspartate 258 contributes to the L-methionine binding site. An L-methionine-binding site is contributed by lysine 289.

Belongs to the AdoMet synthase family. In terms of assembly, homotetramer; dimer of dimers. Mg(2+) is required as a cofactor. K(+) serves as cofactor.

Its subcellular location is the cytoplasm. It catalyses the reaction L-methionine + ATP + H2O = S-adenosyl-L-methionine + phosphate + diphosphate. It functions in the pathway amino-acid biosynthesis; S-adenosyl-L-methionine biosynthesis; S-adenosyl-L-methionine from L-methionine: step 1/1. In terms of biological role, catalyzes the formation of S-adenosylmethionine (AdoMet) from methionine and ATP. The overall synthetic reaction is composed of two sequential steps, AdoMet formation and the subsequent tripolyphosphate hydrolysis which occurs prior to release of AdoMet from the enzyme. The chain is S-adenosylmethionine synthase from Sphingopyxis alaskensis (strain DSM 13593 / LMG 18877 / RB2256) (Sphingomonas alaskensis).